Here is a 155-residue protein sequence, read N- to C-terminus: Ribonuclease H (155 aa).

An RNase H type-1 domain is found at 1–146 (MPELFAYTDG…ADELARAGMK (146 aa)). Positions 9, 52, 74, and 138 each coordinate Mg(2+).

This sequence belongs to the RNase H family. Monomer. Requires Mg(2+) as cofactor.

The protein localises to the cytoplasm. The catalysed reaction is Endonucleolytic cleavage to 5'-phosphomonoester.. Endonuclease that specifically degrades the RNA of RNA-DNA hybrids. The sequence is that of Ribonuclease H from Ruegeria pomeroyi (strain ATCC 700808 / DSM 15171 / DSS-3) (Silicibacter pomeroyi).